The primary structure comprises 1039 residues: Kinesin-like protein KIN-5B (1039 aa).

Positions 48–390 (NVQVILRCKP…LDYAYRAKNI (343 aa)) constitute a Kinesin motor domain. An ATP-binding site is contributed by 134-141 (GQTGTGKT). Positions 1008–1039 (TLSEEHTSLEKISTKQGLGEANNRTPFLEVNK) are disordered. The segment covering 1010-1020 (SEEHTSLEKIS) has biased composition (basic and acidic residues).

Belongs to the TRAFAC class myosin-kinesin ATPase superfamily. Kinesin family. KIN-5/BimC subfamily.

Its subcellular location is the cytoplasm. The protein resides in the cytoskeleton. It is found in the spindle. In terms of biological role, responsible for microtubule translocation. May be important for the organization of phragmoplast-specific arrays of microtubules. Plays an essential role in stabilizing the mitotic spindle. Required during mitotic cytokinesis. The chain is Kinesin-like protein KIN-5B from Arabidopsis thaliana (Mouse-ear cress).